Here is a 1099-residue protein sequence, read N- to C-terminus: Carbamoyl phosphate synthase large chain (1099 aa).

The tract at residues 1-402 (MPKREDIKRI…ALGKALRSLE (402 aa)) is carboxyphosphate synthetic domain. 12 residues coordinate ATP: Arg-129, Arg-169, Gly-175, Gly-176, Glu-208, Val-210, Glu-215, Gly-241, Ile-242, His-243, Gln-285, and Glu-299. Residues 133-328 (KETMEKAGLE…IAKVAALLAV (196 aa)) enclose the ATP-grasp 1 domain. Mg(2+) contacts are provided by Gln-285, Glu-299, and Asn-301. Mn(2+) is bound by residues Gln-285, Glu-299, and Asn-301. The oligomerization domain stretch occupies residues 403-541 (LDAAPKLDLE…STYNGVENEA (139 aa)). Residues 542-944 (VPSDREKIMI…AFAKAQIAAG (403 aa)) are carbamoyl phosphate synthetic domain. Residues 666 to 857 (AKLLKQIGLK…VARIAAKIMV (192 aa)) enclose the ATP-grasp 2 domain. 10 residues coordinate ATP: Arg-702, Lys-741, Leu-743, Glu-748, Gly-773, Val-774, His-775, Ser-776, Gln-816, and Glu-828. The Mg(2+) site is built by Gln-816, Glu-828, and Asn-830. Residues Gln-816, Glu-828, and Asn-830 each coordinate Mn(2+). An MGS-like domain is found at 945 to 1099 (NPLPTTGAIL…VRRLTDTWKM (155 aa)). The segment at 945–1099 (NPLPTTGAIL…VRRLTDTWKM (155 aa)) is allosteric domain.

It belongs to the CarB family. Composed of two chains; the small (or glutamine) chain promotes the hydrolysis of glutamine to ammonia, which is used by the large (or ammonia) chain to synthesize carbamoyl phosphate. Tetramer of heterodimers (alpha,beta)4. Mg(2+) serves as cofactor. The cofactor is Mn(2+).

The enzyme catalyses hydrogencarbonate + L-glutamine + 2 ATP + H2O = carbamoyl phosphate + L-glutamate + 2 ADP + phosphate + 2 H(+). It carries out the reaction hydrogencarbonate + NH4(+) + 2 ATP = carbamoyl phosphate + 2 ADP + phosphate + 2 H(+). It participates in amino-acid biosynthesis; L-arginine biosynthesis; carbamoyl phosphate from bicarbonate: step 1/1. Its pathway is pyrimidine metabolism; UMP biosynthesis via de novo pathway; (S)-dihydroorotate from bicarbonate: step 1/3. Large subunit of the glutamine-dependent carbamoyl phosphate synthetase (CPSase). CPSase catalyzes the formation of carbamoyl phosphate from the ammonia moiety of glutamine, carbonate, and phosphate donated by ATP, constituting the first step of 2 biosynthetic pathways, one leading to arginine and/or urea and the other to pyrimidine nucleotides. The large subunit (synthetase) binds the substrates ammonia (free or transferred from glutamine from the small subunit), hydrogencarbonate and ATP and carries out an ATP-coupled ligase reaction, activating hydrogencarbonate by forming carboxy phosphate which reacts with ammonia to form carbamoyl phosphate. The chain is Carbamoyl phosphate synthase large chain from Thermotoga petrophila (strain ATCC BAA-488 / DSM 13995 / JCM 10881 / RKU-1).